The primary structure comprises 217 residues: Adenylate kinase (217 aa).

11–16 lines the ATP pocket; sequence GAGKGT. The interval 31–60 is NMP; the sequence is STGDMFREAMANETPVGLEAKSYIDKGNLV. AMP-binding positions include Thr-32, Arg-37, 58–60, 86–89, and Gln-93; these read NLV and GFPR. Positions 127–165 are LID; it reads ARYICKKCGATYNKISNPTKVEGTCDRCGGHEFFQREDD. Arg-128 is a binding site for ATP. The Zn(2+) site is built by Cys-131 and Cys-134. 137 to 138 serves as a coordination point for ATP; sequence TY. Zn(2+)-binding residues include Cys-151 and Cys-154. AMP-binding residues include Arg-162 and Arg-173. Gln-201 is a binding site for ATP.

The protein belongs to the adenylate kinase family. In terms of assembly, monomer.

It is found in the cytoplasm. The enzyme catalyses AMP + ATP = 2 ADP. The protein operates within purine metabolism; AMP biosynthesis via salvage pathway; AMP from ADP: step 1/1. Functionally, catalyzes the reversible transfer of the terminal phosphate group between ATP and AMP. Plays an important role in cellular energy homeostasis and in adenine nucleotide metabolism. The chain is Adenylate kinase from Lactobacillus johnsonii (strain CNCM I-12250 / La1 / NCC 533).